The chain runs to 343 residues: S-adenosylmethionine:tRNA ribosyltransferase-isomerase (343 aa).

It belongs to the QueA family. As to quaternary structure, monomer.

The protein resides in the cytoplasm. The enzyme catalyses 7-aminomethyl-7-carbaguanosine(34) in tRNA + S-adenosyl-L-methionine = epoxyqueuosine(34) in tRNA + adenine + L-methionine + 2 H(+). Its pathway is tRNA modification; tRNA-queuosine biosynthesis. Functionally, transfers and isomerizes the ribose moiety from AdoMet to the 7-aminomethyl group of 7-deazaguanine (preQ1-tRNA) to give epoxyqueuosine (oQ-tRNA). This is S-adenosylmethionine:tRNA ribosyltransferase-isomerase from Syntrophotalea carbinolica (strain DSM 2380 / NBRC 103641 / GraBd1) (Pelobacter carbinolicus).